A 517-amino-acid polypeptide reads, in one-letter code: ATP synthase subunit alpha (517 aa).

An ATP-binding site is contributed by G174–T181.

It belongs to the ATPase alpha/beta chains family. As to quaternary structure, F-type ATPases have 2 components, CF(1) - the catalytic core - and CF(0) - the membrane proton channel. CF(1) has five subunits: alpha(3), beta(3), gamma(1), delta(1), epsilon(1). CF(0) has three main subunits: a(1), b(2) and c(9-12). The alpha and beta chains form an alternating ring which encloses part of the gamma chain. CF(1) is attached to CF(0) by a central stalk formed by the gamma and epsilon chains, while a peripheral stalk is formed by the delta and b chains.

The protein localises to the cell inner membrane. The catalysed reaction is ATP + H2O + 4 H(+)(in) = ADP + phosphate + 5 H(+)(out). In terms of biological role, produces ATP from ADP in the presence of a proton gradient across the membrane. The alpha chain is a regulatory subunit. The sequence is that of ATP synthase subunit alpha from Delftia acidovorans (strain DSM 14801 / SPH-1).